Consider the following 104-residue polypeptide: DNA-directed RNA polymerase subunit omega (104 aa).

The tract at residues 53–104 (EIESGNVTIHPDPEGKREAVRRRIEEEKRRKEEEEKKIKEQIAKEKEDGEKI) is disordered. Residues 63–104 (PDPEGKREAVRRRIEEEKRRKEEEEKKIKEQIAKEKEDGEKI) are compositionally biased toward basic and acidic residues.

Belongs to the RNA polymerase subunit omega family. In terms of assembly, the RNAP catalytic core consists of 2 alpha, 1 beta, 1 beta' and 1 omega subunit. When a sigma factor is associated with the core the holoenzyme is formed, which can initiate transcription.

It carries out the reaction RNA(n) + a ribonucleoside 5'-triphosphate = RNA(n+1) + diphosphate. Its function is as follows. Promotes RNA polymerase assembly. Latches the N- and C-terminal regions of the beta' subunit thereby facilitating its interaction with the beta and alpha subunits. The protein is DNA-directed RNA polymerase subunit omega of Streptococcus pneumoniae serotype 2 (strain D39 / NCTC 7466).